The chain runs to 106 residues: Urease subunit beta (106 aa).

It belongs to the urease beta subunit family. In terms of assembly, heterotrimer of UreA (gamma), UreB (beta) and UreC (alpha) subunits. Three heterotrimers associate to form the active enzyme.

It is found in the cytoplasm. It catalyses the reaction urea + 2 H2O + H(+) = hydrogencarbonate + 2 NH4(+). It functions in the pathway nitrogen metabolism; urea degradation; CO(2) and NH(3) from urea (urease route): step 1/1. This is Urease subunit beta from Prochlorococcus marinus (strain MIT 9312).